The chain runs to 394 residues: Elongation factor Tu 1 (394 aa).

In terms of domain architecture, tr-type G spans 10–204; it reads KPHVNVGTIG…ALDSYIPEPQ (195 aa). Residues 19–26 form a G1 region; the sequence is GHVDHGKT. 19 to 26 is a binding site for GTP; it reads GHVDHGKT. Mg(2+) is bound at residue T26. The tract at residues 60-64 is G2; sequence GITIN. Residues 81 to 84 form a G3 region; that stretch reads DCPG. Residues 81 to 85 and 136 to 139 contribute to the GTP site; these read DCPGH and NKCD. The interval 136 to 139 is G4; it reads NKCD. Positions 174–176 are G5; it reads SAL.

This sequence belongs to the TRAFAC class translation factor GTPase superfamily. Classic translation factor GTPase family. EF-Tu/EF-1A subfamily. Monomer.

It is found in the cytoplasm. The catalysed reaction is GTP + H2O = GDP + phosphate + H(+). In terms of biological role, GTP hydrolase that promotes the GTP-dependent binding of aminoacyl-tRNA to the A-site of ribosomes during protein biosynthesis. This Shewanella baltica (strain OS195) protein is Elongation factor Tu 1.